Here is a 91-residue protein sequence, read N- to C-terminus: Sec-independent protein translocase protein TatA (91 aa).

Residues 3–23 (FFGIGLPEMLVILAIALLVFG) form a helical membrane-spanning segment. A disordered region spans residues 57 to 91 (DRTPATPAEATVEPPVLDSAPTEAVTVEKQTETQV). Positions 59–72 (TPATPAEATVEPPV) are enriched in low complexity.

The protein belongs to the TatA/E family. Forms a complex with TatC.

It localises to the cell inner membrane. In terms of biological role, part of the twin-arginine translocation (Tat) system that transports large folded proteins containing a characteristic twin-arginine motif in their signal peptide across membranes. TatA could form the protein-conducting channel of the Tat system. In Synechococcus elongatus (strain ATCC 33912 / PCC 7942 / FACHB-805) (Anacystis nidulans R2), this protein is Sec-independent protein translocase protein TatA.